The chain runs to 362 residues: RING-H2 finger protein ATL52 (362 aa).

A helical membrane pass occupies residues 58-78 (LIALIGILTSALILVSYYTLI). The segment at 142–184 (CSVCLSEFEENESLRLLPKCNHAFHLPCIDTWLKSHSNCPLCR) adopts an RING-type; atypical zinc-finger fold. Disordered regions lie at residues 252–271 (DARS…DEDS) and 296–333 (EDEE…RSGG). Over residues 309 to 319 (QRREEGEDGDG) the composition is skewed to basic and acidic residues.

This sequence belongs to the RING-type zinc finger family. ATL subfamily. Expressed in flowers.

The protein localises to the membrane. The catalysed reaction is S-ubiquitinyl-[E2 ubiquitin-conjugating enzyme]-L-cysteine + [acceptor protein]-L-lysine = [E2 ubiquitin-conjugating enzyme]-L-cysteine + N(6)-ubiquitinyl-[acceptor protein]-L-lysine.. Its pathway is protein modification; protein ubiquitination. The chain is RING-H2 finger protein ATL52 (ATL52) from Arabidopsis thaliana (Mouse-ear cress).